Here is a 463-residue protein sequence, read N- to C-terminus: Cytoplasmic tRNA 2-thiolation protein 2 (463 aa).

This sequence belongs to the CTU2/NCS2 family.

It is found in the cytoplasm. It participates in tRNA modification; 5-methoxycarbonylmethyl-2-thiouridine-tRNA biosynthesis. Plays a central role in 2-thiolation of mcm(5)S(2)U at tRNA wobble positions of tRNA(Lys), tRNA(Glu) and tRNA(Gln). May act by forming a heterodimer with NCS6 that ligates sulfur from thiocarboxylated URM1 onto the uridine of tRNAs at wobble position. Prior mcm(5) tRNA modification by the elongator complex is required for 2-thiolation. May also be involved in protein urmylation. The protein is Cytoplasmic tRNA 2-thiolation protein 2 of Kluyveromyces lactis (strain ATCC 8585 / CBS 2359 / DSM 70799 / NBRC 1267 / NRRL Y-1140 / WM37) (Yeast).